The primary structure comprises 311 residues: Olfactory receptor 2A5 (311 aa).

The Extracellular portion of the chain corresponds to 1–24 (MTKNQTWVTEFILLGFPLSLRIQM). The N-linked (GlcNAc...) asparagine glycan is linked to N4. The helical transmembrane segment at 25-48 (LLSGLFSLLYVFTLLGNGAILGLI) threads the bilayer. At 49-56 (WLDSRLHT) the chain is on the cytoplasmic side. Residues 57–78 (PMYFFLSHLAIIDISYASNNVP) traverse the membrane as a helical segment. Residues 79–100 (KMLTNLGLNKRKTISFVPCTMQ) are Extracellular-facing. An intrachain disulfide couples C97 to C189. Residues 101–120 (TFLYMAFAHTECLILVMMSY) form a helical membrane-spanning segment. Residues 121-139 (DRYMAICHPLQYSVIMRWG) lie on the Cytoplasmic side of the membrane. A helical transmembrane segment spans residues 140–158 (VCTVLAVTSWACGSLLALV). Over 159–196 (HVVLILRLPFCGPHEINHFFCEILSVLKLACADTWLNQ) the chain is Extracellular. A helical transmembrane segment spans residues 197–219 (VVIFAASVFILVGPLCLVLVSYS). At 220–236 (RILAAILRIQSGEGRRK) the chain is on the cytoplasmic side. The chain crosses the membrane as a helical span at residues 237 to 259 (AFSTCSSHLCMVGLFFGSAIVMY). The Extracellular segment spans residues 260–272 (MAPKSRHPEEQQK). Residues 273–292 (VLSLFYSLFNPMLNPLIYSL) traverse the membrane as a helical segment. The Cytoplasmic portion of the chain corresponds to 293 to 311 (RNAEVKGALKRVLWKQRSK).

It belongs to the G-protein coupled receptor 1 family.

The protein resides in the cell membrane. In terms of biological role, odorant receptor. In Homo sapiens (Human), this protein is Olfactory receptor 2A5 (OR2A5).